The sequence spans 349 residues: Ion-translocating oxidoreductase complex subunit D (349 aa).

A run of 3 helical transmembrane segments spans residues Cys-36–Ser-56, Ser-77–Val-99, and Ala-124–Ala-144. At Thr-185 the chain carries FMN phosphoryl threonine. 5 consecutive transmembrane segments (helical) span residues Gly-212 to Leu-232, Trp-239 to Leu-259, Ala-265 to Thr-285, Ala-291 to Ile-311, and Gly-315 to Ile-335.

Belongs to the NqrB/RnfD family. As to quaternary structure, the complex is composed of six subunits: RnfA, RnfB, RnfC, RnfD, RnfE and RnfG. FMN is required as a cofactor.

It localises to the cell inner membrane. Functionally, part of a membrane-bound complex that couples electron transfer with translocation of ions across the membrane. This is Ion-translocating oxidoreductase complex subunit D from Shewanella sp. (strain ANA-3).